The chain runs to 291 residues: T-cell leukemia homeobox protein 3 (291 aa).

Residues 1–56 (MEAPASAQTPHPHEPISFGIDQILNSPDQDSAPAPRGPDGASYLGGPPGGRPGATY) are disordered. The homeobox DNA-binding region spans 166 to 225 (RKKPRTSFSRVQICELEKRFHRQKYLASAERAALAKSLKMTDAQVKTWFQNRRTKWRRQT).

It is found in the nucleus. In Homo sapiens (Human), this protein is T-cell leukemia homeobox protein 3 (TLX3).